The sequence spans 469 residues: MGQVLPVFAHCKEAPSTASSTPDSTEGGNDDSDFRELHTAREFSEDEEEETTSQDWGTPRELTFSYIAFDGVVGSGGRRDSVVRRPRPQGRSVSEPRDPPPQPSLGDSLESIPSLSQSPEPGRRGDPDTVPPAERPLEELRLRLDQLGWAVRSAGSGEDSATSSSTPLENEEPDGLEASEAGETNLELRLAQPLHLQFEGLTPQLSPSSGIPQAHTPSPQRSQDLNTGPDEPLPNGEGEHWRLLEQEPITAQCLNSTDQSEFTLEPLLLVADLLYWKDTRTSGAIFTGLMASLLCLLHFSIVSVAAHLALLGLCATISLRVYRKVLQAVHRGDGTNPFQAYLDMDLTLTREQTERLSQQIASHVVSTATQLRHFFLVEDLVDSLKLALLFYILTFVGAIFNGLTLVILGVVALFTVPLLYRQHQAQIDQYVGLVTSQLSHIKAKIRAKIPGTGTLAPAASVSGSKAKAE.

Disordered stretches follow at residues 1–180 (MGQV…EASE) and 201–238 (LTPQ…NGEG). The span at 14-25 (APSTASSTPDST) shows a compositional bias: low complexity. Residues 32 to 43 (SDFRELHTAREF) are compositionally biased toward basic and acidic residues. The residue at position 44 (Ser-44) is a Phosphoserine. Residues 135–144 (RPLEELRLRL) are compositionally biased toward basic and acidic residues. Composition is skewed to polar residues over residues 159–168 (DSATSSSTPL) and 203–226 (PQLS…QDLN). The Reticulon domain maps to 270–469 (VADLLYWKDT…SVSGSKAKAE (200 aa)). 2 helical membrane-spanning segments follow: residues 293–313 (LLCL…LLGL) and 388–408 (LLFY…LVIL).

In terms of assembly, interacts with SPAST. Interacts with BACE1. Interacts (via first transmembrane domain) with ARL6IP5/GTRAP3-18. Interacts (via N-terminus) with SLC1A1/EAAC1; the interaction promotes cell surface expression of SLC1A1. In terms of tissue distribution, expressed in brain and spinal cord (at protein level). In the embryonic brain cortex, expressed in neurons but not in astrocytes (at protein level).

The protein localises to the endoplasmic reticulum membrane. Its subcellular location is the sarcoplasmic reticulum membrane. It localises to the cell membrane. The protein resides in the sarcolemma. It is found in the T-tubule. The protein localises to the cytoplasm. Its subcellular location is the myofibril. It localises to the sarcomere. The protein resides in the z line. It is found in the cytoskeleton. Inhibits amyloid precursor protein processing, probably by blocking BACE1 activity. Enhances trafficking of the glutamate transporter SLC1A1/EAAC1 from the endoplasmic reticulum to the cell surface. Plays a role in the translocation of SLC2A4/GLUT4 from intracellular membranes to the cell membrane which facilitates the uptake of glucose into the cell. This Rattus norvegicus (Rat) protein is Reticulon-2.